Consider the following 378-residue polypeptide: Protein SLG1 (378 aa).

Positions 1–21 (MRPNKTSLLLALLSILSQANA) are cleaved as a signal peptide. Residues 22-110 (YEYVNCFSSL…EDAYSVYQLD (89 aa)) form the WSC domain. Topologically, residues 22 to 264 (YEYVNCFSSL…THKKKANVGA (243 aa)) are extracellular. Asn-65 is a glycosylation site (N-linked (GlcNAc...) asparagine). 2 disordered regions span residues 115–201 (SNSI…TSST) and 236–256 (QNSG…SKTH). Positions 236–253 (QNSGSATGTAGSDSTSGS) are enriched in low complexity. Residues 265–285 (IVGGVVGGVVGAVAIALCILL) traverse the membrane as a helical segment. The Cytoplasmic segment spans residues 286 to 378 (IVRHINMKRE…LTVVNPDEAD (93 aa)). Residues 318–378 (ASSFSSNHGP…LTVVNPDEAD (61 aa)) are disordered. Positions 319 to 331 (SSFSSNHGPSSGS) are enriched in low complexity. Phosphoserine is present on residues Ser-331 and Ser-353.

Glycosylated. Phosphorylated. Phosphorylation serves a negative regulatory role.

Its subcellular location is the cell membrane. Its function is as follows. Plays a role during G1 to regulate entering or exiting the cell cycle. Involved in stress responses. Has a role in cell wall integrity signaling. Activates ROM1 or ROM2 catalyzed guanine nucleotide exchange toward RHO1. Important regulator of the actin cytoskeleton rearrangements in conditions of cell wall expansion and membrane stretching. Specifically required for the actin reorganization induced by hypo-osmotic shock. Multicopy suppressor of 1,3-beta-glucan synthase (GS). Activates GS upstream of RHO1. Acts positively on the PKC1-MAPK pathway. Activates transiently SLT2 during alkaline stress, which leads to an increase in the expression of several specific genes. In Saccharomyces cerevisiae (strain ATCC 204508 / S288c) (Baker's yeast), this protein is Protein SLG1 (SLG1).